The following is a 175-amino-acid chain: MERTAIYAGSFDPVTNGHLDILKRGLKLFDRIIVAILINPNKQYLFSVEERISMLEEVTKEIPNTEIDTFSGLLVDYAEQKQAHAILRGMRAVSDFEYEFQLALMNRRLNREVQTVFLMTGLRWIFTSSSIIKEAARFGGNIHGMVPELVERRIDKKMKDTGLYIPPKNNKKQKG.

Residue serine 10 participates in substrate binding. ATP is bound by residues serine 10–phenylalanine 11 and histidine 18. Residues lysine 42, leucine 74, and arginine 88 each contribute to the substrate site. Residues glycine 89 to arginine 91, glutamate 99, and tryptophan 124 to serine 130 each bind ATP.

It belongs to the bacterial CoaD family. In terms of assembly, homohexamer. Mg(2+) is required as a cofactor.

The protein localises to the cytoplasm. The enzyme catalyses (R)-4'-phosphopantetheine + ATP + H(+) = 3'-dephospho-CoA + diphosphate. The protein operates within cofactor biosynthesis; coenzyme A biosynthesis; CoA from (R)-pantothenate: step 4/5. In terms of biological role, reversibly transfers an adenylyl group from ATP to 4'-phosphopantetheine, yielding dephospho-CoA (dPCoA) and pyrophosphate. The protein is Phosphopantetheine adenylyltransferase of Desulfatibacillum aliphaticivorans.